The primary structure comprises 236 residues: MATPHINAVEGAFAETVLFPGDPLRAKYIAETFLENVEQVTDVRNMLGFTGTYKGKRISVMGSGMGIPSCSIYAHELIKDYGVKNLIRVGTCGAISTDVKVRDVIIGMGACTDSRVNRLRFKDNDFAAIADYSLLSAVVDSAKAHGTKIRVGNVFSADLFYTPDPQMFDVMEKMGILGVEMEAAGLYGVAHELGAKALCVVTVSDHIRTGEKTTSDERQTTFSDMIIMTLDAALTL.

Histidine 5 is an a purine D-ribonucleoside binding site. Residues glycine 21, arginine 25, arginine 44, and 88–91 contribute to the phosphate site; that span reads RVGT. A purine D-ribonucleoside is bound by residues 180-182 and 204-205; these read EME and SD. Residue aspartate 205 is the Proton donor of the active site.

This sequence belongs to the PNP/UDP phosphorylase family. Homohexamer; trimer of homodimers.

It carries out the reaction a purine D-ribonucleoside + phosphate = a purine nucleobase + alpha-D-ribose 1-phosphate. It catalyses the reaction a purine 2'-deoxy-D-ribonucleoside + phosphate = a purine nucleobase + 2-deoxy-alpha-D-ribose 1-phosphate. In terms of biological role, catalyzes the reversible phosphorolytic breakdown of the N-glycosidic bond in the beta-(deoxy)ribonucleoside molecules, with the formation of the corresponding free purine bases and pentose-1-phosphate. This is Purine nucleoside phosphorylase DeoD-type from Shewanella frigidimarina (strain NCIMB 400).